The primary structure comprises 281 residues: Bifunctional protein FolD (281 aa).

NADP(+)-binding positions include glycine 165 to glycine 167, threonine 192, and valine 233.

The protein belongs to the tetrahydrofolate dehydrogenase/cyclohydrolase family. In terms of assembly, homodimer.

The catalysed reaction is (6R)-5,10-methylene-5,6,7,8-tetrahydrofolate + NADP(+) = (6R)-5,10-methenyltetrahydrofolate + NADPH. The enzyme catalyses (6R)-5,10-methenyltetrahydrofolate + H2O = (6R)-10-formyltetrahydrofolate + H(+). Its pathway is one-carbon metabolism; tetrahydrofolate interconversion. Functionally, catalyzes the oxidation of 5,10-methylenetetrahydrofolate to 5,10-methenyltetrahydrofolate and then the hydrolysis of 5,10-methenyltetrahydrofolate to 10-formyltetrahydrofolate. The polypeptide is Bifunctional protein FolD (Mycobacterium ulcerans (strain Agy99)).